The chain runs to 1189 residues: Zinc finger CCCH domain-containing protein 6 (1189 aa).

Residues methionine 1–glutamate 12 are compositionally biased toward basic and acidic residues. The disordered stretch occupies residues methionine 1–aspartate 105. The span at aspartate 13–glutamate 28 shows a compositional bias: acidic residues. A coiled-coil region spans residues glutamate 27–asparagine 73. Residues isoleucine 29–tyrosine 46 show a composition bias toward basic and acidic residues. Basic residues predominate over residues arginine 47–asparagine 73. 3 C3H1-type zinc fingers span residues lysine 273–glutamate 299, glutamate 301–phenylalanine 328, and proline 329–leucine 352. Positions threonine 353–glycine 385 form a coiled coil. Disordered stretches follow at residues phenylalanine 451–asparagine 530, proline 630–glycine 659, tyrosine 676–valine 755, leucine 947–proline 1026, and proline 1051–cysteine 1189. A compositionally biased stretch (low complexity) spans glutamine 461 to serine 478. Positions alanine 505–isoleucine 525 are enriched in pro residues. Low complexity predominate over residues histidine 639 to glycine 659. A compositionally biased stretch (polar residues) spans lysine 718–threonine 741. Residues glycine 961 to leucine 973 show a composition bias toward basic and acidic residues. Composition is skewed to low complexity over residues serine 1009–alanine 1020 and serine 1056–glutamate 1069. Serine 1158 carries the post-translational modification Phosphoserine. A compositionally biased stretch (basic and acidic residues) spans aspartate 1164–lysine 1179.

This Homo sapiens (Human) protein is Zinc finger CCCH domain-containing protein 6 (ZC3H6).